The primary structure comprises 323 residues: Serine/threonine-protein kinase-transforming protein raf (323 aa).

A Protein kinase domain is found at 24–284 (VMLSTRIGSG…PQILSSIELL (261 aa)). ATP is bound by residues 30–38 (IGSGSFGTV) and Lys50. The active-site Proton acceptor is the Asp143.

Belongs to the protein kinase superfamily. TKL Ser/Thr protein kinase family. RAF subfamily.

It catalyses the reaction L-seryl-[protein] + ATP = O-phospho-L-seryl-[protein] + ADP + H(+). It carries out the reaction L-threonyl-[protein] + ATP = O-phospho-L-threonyl-[protein] + ADP + H(+). This is Serine/threonine-protein kinase-transforming protein raf (V-RAF) from Murine sarcoma virus 3611.